Here is a 784-residue protein sequence, read N- to C-terminus: LPS-assembly protein LptD (784 aa).

The first 24 residues, 1 to 24, serve as a signal peptide directing secretion; it reads MKKRIPTLLATMIATALYSQQGLA. 2 disulfide bridges follow: Cys-31–Cys-724 and Cys-173–Cys-725.

Belongs to the LptD family. Component of the lipopolysaccharide transport and assembly complex. Interacts with LptE and LptA. In terms of processing, contains two intramolecular disulfide bonds.

The protein localises to the cell outer membrane. Functionally, together with LptE, is involved in the assembly of lipopolysaccharide (LPS) at the surface of the outer membrane. This is LPS-assembly protein LptD from Escherichia coli O6:K15:H31 (strain 536 / UPEC).